Reading from the N-terminus, the 417-residue chain is Phosphoglycerate kinase 1 (417 aa).

Serine 2 is modified (N-acetylserine). Residues serine 2 and serine 4 each carry the phosphoserine modification. Residue lysine 6 is modified to N6-succinyllysine. Position 11 is an N6-acetyllysine (lysine 11). (2R)-3-phosphoglycerate is bound by residues valine 23, aspartate 24, phenylalanine 25, asparagine 26, glutamine 38, and arginine 39. The segment at 38-43 is mitochondrial targeting region exposed following cis-trans isomerization by PIN1 and recognized by the TOM complex for mitochondrial translocation of the protein; that stretch reads QRIKAA. At lysine 48 the chain carries N6-acetyllysine; alternate. Lysine 48 carries the post-translational modification N6-succinyllysine; alternate. Serine 62, histidine 63, glycine 65, and arginine 66 together coordinate (2R)-3-phosphoglycerate. The residue at position 75 (lysine 75) is an N6-acetyllysine. Tyrosine 76 carries the post-translational modification Phosphotyrosine. N6-acetyllysine is present on residues lysine 86 and lysine 91. Lysine 97 is subject to N6-acetyllysine; alternate. Residue lysine 97 is modified to N6-(2-hydroxyisobutyryl)lysine; alternate. Leucine 122 and arginine 123 together coordinate (2R)-3-phosphoglycerate. At lysine 131 the chain carries N6-acetyllysine; alternate. Lysine 131 carries the N6-malonyllysine; alternate modification. N6-acetyllysine is present on lysine 146. (2R)-3-phosphoglycerate contacts are provided by histidine 170 and arginine 171. Lysine 191 carries the N6-succinyllysine modification. Tyrosine 196 carries the post-translational modification Phosphotyrosine. Position 199 is an N6-acetyllysine (lysine 199). Serine 203 is subject to Phosphoserine. ADP is bound at residue glycine 214. Glycine 214 provides a ligand contact to CDP. Positions 215 and 216 each coordinate AMP. Alanine 215 contributes to the ATP binding site. A Mg(2+)-binding site is contributed by alanine 215. N6-(2-hydroxyisobutyryl)lysine is present on lysine 216. The Mg(2+) site is built by alanine 218 and aspartate 219. CDP is bound at residue aspartate 219. Residue lysine 220 participates in AMP binding. Residue lysine 220 participates in ATP binding. Position 220 is an N6-(2-hydroxyisobutyryl)lysine (lysine 220). Glycine 238 lines the ADP pocket. Glycine 238 is a CDP binding site. Glycine 239 serves as a coordination point for AMP. Glycine 239 serves as a coordination point for ATP. N6-acetyllysine occurs at positions 267 and 291. Glycine 313 is an AMP binding site. Residue glycine 313 participates in ATP binding. Lysine 323 carries the post-translational modification N6-(2-hydroxyisobutyryl)lysine. Glycine 338, valine 340, and phenylalanine 343 together coordinate CDP. Residue phenylalanine 343 coordinates ADP. Residue glutamate 344 coordinates AMP. Glutamate 344 is an ATP binding site. Residue lysine 361 is modified to N6-acetyllysine. Residues aspartate 375 and threonine 376 each contribute to the ATP site. Aspartate 375 is a Mg(2+) binding site.

The protein belongs to the phosphoglycerate kinase family. In terms of assembly, monomer. Interacts with kinase MAPK1/ERK2; the interaction is direct, occurs under hypoxic conditions, and promotes its interaction with PIN1. Interacts with peptidyl-prolyl cis-trans isomerase PIN1; the interaction is direct, occurs under hypoxic conditions, and targets the protein to the mitochondrion by promoting interactions with the TOM complex. Interacts with mitochondrial circRNA mcPGK1 (via its 2nd stem-loop); the interaction is direct and targets the protein to the mitochondrion by promoting interactions with the TOM complex. Interacts with pyruvate dehydrogenase kinase PDK1; the interaction is direct, occurs under hypoxic conditions and leads to PDK1-mediated inhibition of pyruvate dehydrogenase complex activity. Requires Mg(2+) as cofactor. Phosphorylated at Ser-203 by MAPK1/ERK2 under hypoxic conditions, which promotes its mitochondrial targeting.

The protein resides in the cytoplasm. It localises to the cytosol. The protein localises to the mitochondrion matrix. It carries out the reaction (2R)-3-phosphoglycerate + ATP = (2R)-3-phospho-glyceroyl phosphate + ADP. The enzyme catalyses L-seryl-[protein] + ATP = O-phospho-L-seryl-[protein] + ADP + H(+). Its pathway is carbohydrate degradation; glycolysis; pyruvate from D-glyceraldehyde 3-phosphate: step 2/5. In terms of biological role, catalyzes one of the two ATP producing reactions in the glycolytic pathway via the reversible conversion of 1,3-diphosphoglycerate to 3-phosphoglycerate. Both L- and D- forms of purine and pyrimidine nucleotides can be used as substrates, but the activity is much lower on pyrimidines. In addition to its role as a glycolytic enzyme, it seems that PGK-1 acts as a polymerase alpha cofactor protein (primer recognition protein). Acts as a protein kinase when localized to the mitochondrion where it phosphorylates pyruvate dehydrogenase kinase PDK1 to inhibit pyruvate dehydrogenase complex activity and suppress the formation of acetyl-coenzyme A from pyruvate, and consequently inhibit oxidative phosphorylation and promote glycolysis. May play a role in sperm motility. The polypeptide is Phosphoglycerate kinase 1 (PGK1) (Sus scrofa (Pig)).